Here is a 206-residue protein sequence, read N- to C-terminus: Large ribosomal subunit protein uL4 (206 aa).

Residues 63–93 (MYKQKGTGRARHHSARAPQFRGGGKAHGPVV) form a disordered region. Basic residues predominate over residues 64–77 (YKQKGTGRARHHSA).

The protein belongs to the universal ribosomal protein uL4 family. In terms of assembly, part of the 50S ribosomal subunit.

Functionally, one of the primary rRNA binding proteins, this protein initially binds near the 5'-end of the 23S rRNA. It is important during the early stages of 50S assembly. It makes multiple contacts with different domains of the 23S rRNA in the assembled 50S subunit and ribosome. In terms of biological role, forms part of the polypeptide exit tunnel. The polypeptide is Large ribosomal subunit protein uL4 (Sinorhizobium medicae (strain WSM419) (Ensifer medicae)).